The primary structure comprises 172 residues: Adenine phosphoribosyltransferase (172 aa).

The protein belongs to the purine/pyrimidine phosphoribosyltransferase family. As to quaternary structure, homodimer.

The protein localises to the cytoplasm. The enzyme catalyses AMP + diphosphate = 5-phospho-alpha-D-ribose 1-diphosphate + adenine. It participates in purine metabolism; AMP biosynthesis via salvage pathway; AMP from adenine: step 1/1. Functionally, catalyzes a salvage reaction resulting in the formation of AMP, that is energically less costly than de novo synthesis. This chain is Adenine phosphoribosyltransferase, found in Streptococcus pyogenes serotype M12 (strain MGAS9429).